The following is a 94-amino-acid chain: Aspartyl/glutamyl-tRNA(Asn/Gln) amidotransferase subunit C (94 aa).

It belongs to the GatC family. In terms of assembly, heterotrimer of A, B and C subunits.

It carries out the reaction L-glutamyl-tRNA(Gln) + L-glutamine + ATP + H2O = L-glutaminyl-tRNA(Gln) + L-glutamate + ADP + phosphate + H(+). The catalysed reaction is L-aspartyl-tRNA(Asn) + L-glutamine + ATP + H2O = L-asparaginyl-tRNA(Asn) + L-glutamate + ADP + phosphate + 2 H(+). In terms of biological role, allows the formation of correctly charged Asn-tRNA(Asn) or Gln-tRNA(Gln) through the transamidation of misacylated Asp-tRNA(Asn) or Glu-tRNA(Gln) in organisms which lack either or both of asparaginyl-tRNA or glutaminyl-tRNA synthetases. The reaction takes place in the presence of glutamine and ATP through an activated phospho-Asp-tRNA(Asn) or phospho-Glu-tRNA(Gln). This Campylobacter jejuni subsp. jejuni serotype O:6 (strain 81116 / NCTC 11828) protein is Aspartyl/glutamyl-tRNA(Asn/Gln) amidotransferase subunit C.